The following is a 28-amino-acid chain: M-poneritoxin-Dq4b/U1-poneritoxin-Dq4c/U1-poneritoxin-Dq4d (28 aa).

Methionine 20 is subject to Methionine sulfoxide; in form U1-PONTX-Dq4d. Alanine 28 is modified (alanine amide; in form Dq-1362 and U1-PONTX-Dq4d).

In terms of processing, occurs in 3 forms, M-PONTX-Dq4b has an amidated Ala-28, U1-PONTX-Dq4d has an amidated Ala-28 and an oxidized Met-20, U1-PONTX-Dq4c has no modifications at either Met-20 or Ala-28. In terms of tissue distribution, expressed by the venom gland.

The protein localises to the secreted. Its function is as follows. M-poneritoxin-Dq4b: this synthetic peptide has antimicrobial activity against Gram-positive bacteria B.amyloliquefacies S499 (MIC=0.1 mM), L.monocytogenes 2231 and S.aureus ATCC 29213, against Gram-negative bacteria P.putida BTP1, P.aeruginosa PaO1 and E.coli ATCC 10536, and against the fungi S.cerevisiae, R.mucilaginosa and C.cucumerinum. Not active against the fungi F.oxysporum and B.cinerea. The sequence is that of M-poneritoxin-Dq4b/U1-poneritoxin-Dq4c/U1-poneritoxin-Dq4d from Dinoponera quadriceps (South American ant).